The sequence spans 1097 residues: Platelet-derived growth factor receptor beta (1097 aa).

An N-terminal signal peptide occupies residues 1–31 (MGLPEVMPASVLRGQLLLFVLLLLGPQISQG). Ig-like C2-type domains follow at residues 32-119 (LVIT…YIFV), 128-209 (PMDS…YSLQ), and 213-308 (INVS…INVT). At 32 to 531 (LVITPPGPEF…VVPHSLPFKV (500 aa)) the chain is on the extracellular side. Residues N44, N88, and N102 are each glycosylated (N-linked (GlcNAc...) asparagine). C53 and C99 are oxidised to a cystine. The cysteines at positions 148 and 189 are disulfide-linked. Residue N214 is glycosylated (N-linked (GlcNAc...) asparagine). An intrachain disulfide couples C234 to C290. N-linked (GlcNAc...) asparagine glycans are attached at residues N291, N306, N353, N370, N444, N467, and N478. An Ig-like C2-type 4 domain is found at 415 to 523 (PVRVLELSES…GRDSQEVTVV (109 aa)). C435 and C507 form a disulfide bridge. The helical transmembrane segment at 532–552 (VVISAILALVVLTVISLIILI) threads the bilayer. Over 553–1097 (MLWQRKPRYE…PLAEAEDSFL (545 aa)) the chain is Cytoplasmic. Phosphotyrosine; by autocatalysis is present on residues Y561, Y578, and Y580. The region spanning 599-961 (LVLGRTLGSG…QLVLLLERLL (363 aa)) is the Protein kinase domain. ATP-binding positions include 605-613 (LGSGAFGQV) and K633. Y685 carries the phosphotyrosine; by ABL1 and ABL2 modification. Phosphotyrosine; by autocatalysis occurs at positions 715, 739, 750, 762, 770, 774, and 777. Catalysis depends on D825, which acts as the Proton acceptor. Y856 carries the post-translational modification Phosphotyrosine; by autocatalysis. Y933 and Y969 each carry phosphotyrosine; by ABL1 and ABL2. Y1008 and Y1020 each carry phosphotyrosine; by autocatalysis. The tract at residues 1016–1097 (TDNDYIIPLP…PLAEAEDSFL (82 aa)) is disordered. The span at 1042 to 1059 (SLASSTLNEVNTSSTISC) shows a compositional bias: polar residues. The span at 1072–1081 (EPEAQLEQPQ) shows a compositional bias: low complexity.

It belongs to the protein kinase superfamily. Tyr protein kinase family. CSF-1/PDGF receptor subfamily. In terms of assembly, interacts with homodimeric PDGFB and PDGFD, and with heterodimers formed by PDGFA and PDGFB. May also interact with homodimeric PDGFC. Monomer in the absence of bound ligand. Interaction with homodimeric PDGFB, heterodimers formed by PDGFA and PDGFB or homodimeric PDGFD, leads to receptor dimerization, where both PDGFRA homodimers and heterodimers with PDGFRB are observed. Interacts with SH2B2/APS. Interacts directly (tyrosine phosphorylated) with SHB. Interacts (tyrosine phosphorylated) with PIK3R1 and RASA1. Interacts (tyrosine phosphorylated) with CBL. Interacts (tyrosine phosphorylated) with SRC and SRC family kinases. Interacts (tyrosine phosphorylated) with PIK3C2B, maybe indirectly. Interacts (tyrosine phosphorylated) with SHC1, GRB7, GRB10 and NCK1. Interaction with GRB2 is mediated by SHC1. Interacts (via C-terminus) with NHERF1. N-glycosylated. In terms of processing, ubiquitinated. After autophosphorylation, the receptor is polyubiquitinated, leading to its degradation. Post-translationally, autophosphorylated on tyrosine residues upon ligand binding. Autophosphorylation occurs in trans, i.e. one subunit of the dimeric receptor phosphorylates tyrosine residues on the other subunit. Phosphorylation at Tyr-578, and to a lesser degree, Tyr-580 is important for interaction with SRC. Phosphorylation at Tyr-715 is important for interaction with GRB2. Phosphorylation at Tyr-739 and Tyr-750 is important for interaction with PIK3R1. Phosphorylation at Tyr-750 is important for interaction with NCK1. Phosphorylation at Tyr-770 and Tyr-856 is important for interaction with RASA1/GAP. Phosphorylation at Tyr-856 is important for efficient phosphorylation of PLCG1 and PTPN11, resulting in increased phosphorylation of AKT1, MAPK1/ERK2 and/or MAPK3/ERK1, PDCD6IP/ALIX and STAM, and in increased cell proliferation. Phosphorylation at Tyr-1008 is important for interaction with PTPN11. Phosphorylation at Tyr-1008 and Tyr-1020 is important for interaction with PLCG1. Dephosphorylated by PTPRJ at Tyr-750, Tyr-856, Tyr-1008 and Tyr-1020. Dephosphorylated by PTPN2 at Tyr-578 and Tyr-1020.

The protein resides in the cell membrane. Its subcellular location is the cytoplasmic vesicle. The protein localises to the lysosome lumen. The catalysed reaction is L-tyrosyl-[protein] + ATP = O-phospho-L-tyrosyl-[protein] + ADP + H(+). With respect to regulation, present in an inactive conformation in the absence of bound ligand. Binding of PDGFB and/or PDGFD leads to dimerization and activation by autophosphorylation on tyrosine residues. Functionally, tyrosine-protein kinase that acts as a cell-surface receptor for homodimeric PDGFB and PDGFD and for heterodimers formed by PDGFA and PDGFB, and plays an essential role in the regulation of embryonic development, cell proliferation, survival, differentiation, chemotaxis and migration. Plays an essential role in blood vessel development by promoting proliferation, migration and recruitment of pericytes and smooth muscle cells to endothelial cells. Plays a role in the migration of vascular smooth muscle cells and the formation of neointima at vascular injury sites. Required for normal development of the cardiovascular system. Required for normal recruitment of pericytes (mesangial cells) in the kidney glomerulus, and for normal formation of a branched network of capillaries in kidney glomeruli. Promotes rearrangement of the actin cytoskeleton and the formation of membrane ruffles. Binding of its cognate ligands - homodimeric PDGFB, heterodimers formed by PDGFA and PDGFB or homodimeric PDGFD -leads to the activation of several signaling cascades; the response depends on the nature of the bound ligand and is modulated by the formation of heterodimers between PDGFRA and PDGFRB. Phosphorylates PLCG1, PIK3R1, PTPN11, RASA1/GAP, CBL, SHC1 and NCK1. Activation of PLCG1 leads to the production of the cellular signaling molecules diacylglycerol and inositol 1,4,5-trisphosphate, mobilization of cytosolic Ca(2+) and the activation of protein kinase C. Phosphorylation of PIK3R1, the regulatory subunit of phosphatidylinositol 3-kinase, leads to the activation of the AKT1 signaling pathway. Phosphorylation of SHC1, or of the C-terminus of PTPN11, creates a binding site for GRB2, resulting in the activation of HRAS, RAF1 and down-stream MAP kinases, including MAPK1/ERK2 and/or MAPK3/ERK1. Promotes phosphorylation and activation of SRC family kinases. Promotes phosphorylation of PDCD6IP/ALIX and STAM. Receptor signaling is down-regulated by protein phosphatases that dephosphorylate the receptor and its down-stream effectors, and by rapid internalization of the activated receptor. The chain is Platelet-derived growth factor receptor beta (Pdgfrb) from Rattus norvegicus (Rat).